The following is a 1200-amino-acid chain: DNA polymerase subunit gamma-1 (1200 aa).

2 disordered regions span residues 471 to 515 and 667 to 688; these read QKKT…RPSM and MDLSSEVPATAKAKKRNNSSEH. The span at 472–481 shows a compositional bias: basic residues; sequence KKTKISKKQK. Residues 494–512 show a composition bias toward basic and acidic residues; it reads LVEDHNEDPGPPTEKEESR.

It belongs to the DNA polymerase type-A family. In terms of assembly, heterotrimer composed of a catalytic subunit and a homodimer of accessory subunits. Mg(2+) serves as cofactor.

Its subcellular location is the mitochondrion. The protein resides in the mitochondrion matrix. It is found in the mitochondrion nucleoid. The catalysed reaction is DNA(n) + a 2'-deoxyribonucleoside 5'-triphosphate = DNA(n+1) + diphosphate. Functionally, involved in the replication of mitochondrial DNA. Associates with mitochondrial DNA. This Xenopus laevis (African clawed frog) protein is DNA polymerase subunit gamma-1 (polg).